We begin with the raw amino-acid sequence, 289 residues long: ATP synthase gamma chain (289 aa).

It belongs to the ATPase gamma chain family. In terms of assembly, F-type ATPases have 2 components, CF(1) - the catalytic core - and CF(0) - the membrane proton channel. CF(1) has five subunits: alpha(3), beta(3), gamma(1), delta(1), epsilon(1). CF(0) has three main subunits: a, b and c.

The protein resides in the cell inner membrane. In terms of biological role, produces ATP from ADP in the presence of a proton gradient across the membrane. The gamma chain is believed to be important in regulating ATPase activity and the flow of protons through the CF(0) complex. This Actinobacillus succinogenes (strain ATCC 55618 / DSM 22257 / CCUG 43843 / 130Z) protein is ATP synthase gamma chain.